Consider the following 283-residue polypeptide: Ribose-phosphate pyrophosphokinase (283 aa).

Residues 34–36 (DGE) and 89–90 (RQ) each bind ATP. Residues H120 and D159 each coordinate Mg(2+). K182 is an active-site residue. D-ribose 5-phosphate-binding residues include R184 and D208.

It belongs to the ribose-phosphate pyrophosphokinase family. Class III (archaeal) subfamily. Mg(2+) is required as a cofactor.

Its subcellular location is the cytoplasm. It catalyses the reaction D-ribose 5-phosphate + ATP = 5-phospho-alpha-D-ribose 1-diphosphate + AMP + H(+). It functions in the pathway metabolic intermediate biosynthesis; 5-phospho-alpha-D-ribose 1-diphosphate biosynthesis; 5-phospho-alpha-D-ribose 1-diphosphate from D-ribose 5-phosphate (route I): step 1/1. Its function is as follows. Involved in the biosynthesis of the central metabolite phospho-alpha-D-ribosyl-1-pyrophosphate (PRPP) via the transfer of pyrophosphoryl group from ATP to 1-hydroxyl of ribose-5-phosphate (Rib-5-P). The protein is Ribose-phosphate pyrophosphokinase of Methanosarcina acetivorans (strain ATCC 35395 / DSM 2834 / JCM 12185 / C2A).